The chain runs to 231 residues: 7-cyano-7-deazaguanine synthase (231 aa).

Residue 8–18 coordinates ATP; sequence FSGGQDSTTCL. Residues C188, C197, C200, and C203 each contribute to the Zn(2+) site.

Belongs to the QueC family. The cofactor is Zn(2+).

It catalyses the reaction 7-carboxy-7-deazaguanine + NH4(+) + ATP = 7-cyano-7-deazaguanine + ADP + phosphate + H2O + H(+). The protein operates within purine metabolism; 7-cyano-7-deazaguanine biosynthesis. Functionally, catalyzes the ATP-dependent conversion of 7-carboxy-7-deazaguanine (CDG) to 7-cyano-7-deazaguanine (preQ(0)). The chain is 7-cyano-7-deazaguanine synthase from Salmonella schwarzengrund (strain CVM19633).